Reading from the N-terminus, the 256-residue chain is RNA polymerase sigma factor SigI1 (256 aa).

The short motif at 67–80 (DEFSIALSAFNEAI) is the Polymerase core binding element. The segment at residues 205 to 224 (RNELKKKAKVHGRTIGNNRK) is a DNA-binding region (H-T-H motif).

The protein belongs to the sigma-70 factor family. SigI subfamily. Interacts with RsgI1.

It is found in the cytoplasm. With respect to regulation, negatively regulated by the anti-sigma-I factor RsgI1. Binding of the polysaccharide substrate to RsgI1 may lead to the release and activation of SigI1. In terms of biological role, sigma factors are initiation factors that promote the attachment of RNA polymerase to specific initiation sites and are then released. This sigma factor is involved in regulation of cellulosomal genes via an external polysaccharide-sensing mechanism. SigI1 promotes transcription from sigI1 and celS promoters. The chain is RNA polymerase sigma factor SigI1 from Acetivibrio thermocellus (strain ATCC 27405 / DSM 1237 / JCM 9322 / NBRC 103400 / NCIMB 10682 / NRRL B-4536 / VPI 7372) (Clostridium thermocellum).